We begin with the raw amino-acid sequence, 754 residues long: C2H2 finger domain transcription factor crzA (754 aa).

5 disordered regions span residues 1–51, 63–150, 187–227, 269–299, and 384–543; these read MASQ…TVTG, SFAN…FSDL, VHQQ…QGST, QGHRRAPSEVSEISSAAPSPYLSQHESFDGV, and GAEG…RVQK. Positions 30–44 are enriched in low complexity; that stretch reads HQQQQQQQHQQHQGQ. Composition is skewed to polar residues over residues 63-80 and 94-114; these read SFANSSFDPNSNNVSPSA and TPASQTDQNYANSLQIPQSYG. The segment covering 130-140 has biased composition (low complexity); the sequence is QQQSQQQHHQQ. Positions 141–150 are enriched in polar residues; sequence PSLDDNFSDL. A compositionally biased stretch (low complexity) spans 189-209; the sequence is QQSHPTQIPSSHSSTSPQISP. Composition is skewed to polar residues over residues 210–227 and 279–293; these read LEQQQHSSPGPMSTQGST and SEISSAAPSPYLSQH. Composition is skewed to low complexity over residues 459 to 472 and 491 to 515; these read STSRLRSSSTSSSL and RQQQSNPSSRDPSPSRSNRRLSTSS. 2 C2H2-type zinc fingers span residues 548-570 and 576-598; these read FQCNLCPKRFTRAYNLRSHLRTH and FVCTVCGKAFARQHDRKRHEGLH. The C2H2-type 3; degenerate zinc-finger motif lies at 604-635; that stretch reads FVCQGELSRGGQWGCGRRFARADALGRHFRSE. Residues 708–737 are disordered; the sequence is ADDPSDIGGRSSFDASSGNEFGFEDDDSGL.

The protein resides in the nucleus. Its subcellular location is the cytoplasm. Functionally, transcription factor involved in the regulation of calcium ion homeostasis. Regulates genes encoding calcium transporters, transcription factors and genes that could be directly or indirectly involved in calcium metabolism. Supports especially pmcA, pmcB and pmcC expression encoding for calcium-translocating P-type ATPases. Binds target promoters at motif A[GT][CG]CA[AC][AG]. Plays an essential role germination, radial growth, and asexual development. Also plays a major role in proper chitin and glucan incorporation into the cell wall. Involved in the high-osmolarity glycerol response (HOG) signaling pathway. Required for pathogenicity in an experimental murine model of invasive pulmonary aspergillosis. The chain is C2H2 finger domain transcription factor crzA from Aspergillus fumigatus (strain ATCC MYA-4609 / CBS 101355 / FGSC A1100 / Af293) (Neosartorya fumigata).